Here is a 21-residue protein sequence, read N- to C-terminus: Cytoplasmic filament protein A (21 aa).

Positions 1 to 21 (AILELPQSPNVFHPEKPSAVG) are disordered.

The protein resides in the cytoplasm. Component of the cytoplasmic filaments that run the length of the organism just underneath the cytoplasmic membrane. The sequence is that of Cytoplasmic filament protein A (cfpA) from Treponema phagedenis.